The chain runs to 308 residues: CASP-like protein 4A2 (308 aa).

Residues 1 to 135 form a disordered region; the sequence is MALEAQPSPS…APAPAPRVPA (135 aa). At 1-161 the chain is on the cytoplasmic side; the sequence is MALEAQPSPS…KRPTAVLQRT (161 aa). A compositionally biased stretch (gly residues) spans 22 to 31; that stretch reads GGAGAPGGSA. Over residues 32–44 the composition is skewed to low complexity; sequence GDADAQARRATSG. Composition is skewed to pro residues over residues 54-65 and 89-132; these read RRSPPPPFPRTP and FQPP…PAPR. Residues 162–182 form a helical membrane-spanning segment; the sequence is ALVARVAAALLCLAALAVLAA. The Extracellular segment spans residues 183-203; the sequence is DSRKGFALDSYSNYSQLRYSE. Residue asparagine 195 is glycosylated (N-linked (GlcNAc...) asparagine). A helical membrane pass occupies residues 204-224; it reads AVNVIGFVYSVLQFFVLADLM. Residues 225 to 240 are Cytoplasmic-facing; it reads RRNKHLNPRRKGDYFD. The chain crosses the membrane as a helical span at residues 241–262; it reads FFMDQVLAYLLISSSSSATARV. The Extracellular segment spans residues 263–280; sequence GDWIDNWGSDPFPKMANS. N-linked (GlcNAc...) asparagine glycosylation occurs at asparagine 279. A helical transmembrane segment spans residues 281–301; it reads SIAISFMAFLVFAISALISAY. Topologically, residues 302 to 308 are cytoplasmic; the sequence is NLFRRDI.

The protein belongs to the Casparian strip membrane proteins (CASP) family. In terms of assembly, homodimer and heterodimers.

It localises to the cell membrane. This Oryza sativa subsp. japonica (Rice) protein is CASP-like protein 4A2.